A 161-amino-acid polypeptide reads, in one-letter code: Ribosome maturation factor RimP (161 aa).

Belongs to the RimP family.

The protein resides in the cytoplasm. In terms of biological role, required for maturation of 30S ribosomal subunits. This is Ribosome maturation factor RimP from Desulfosudis oleivorans (strain DSM 6200 / JCM 39069 / Hxd3) (Desulfococcus oleovorans).